Consider the following 49-residue polypeptide: Large ribosomal subunit protein bL33 (49 aa).

The protein belongs to the bacterial ribosomal protein bL33 family.

In Natranaerobius thermophilus (strain ATCC BAA-1301 / DSM 18059 / JW/NM-WN-LF), this protein is Large ribosomal subunit protein bL33.